A 420-amino-acid chain; its full sequence is Histidine--tRNA ligase (420 aa).

This sequence belongs to the class-II aminoacyl-tRNA synthetase family. Homodimer.

Its subcellular location is the cytoplasm. The catalysed reaction is tRNA(His) + L-histidine + ATP = L-histidyl-tRNA(His) + AMP + diphosphate + H(+). The chain is Histidine--tRNA ligase from Thermodesulfovibrio yellowstonii (strain ATCC 51303 / DSM 11347 / YP87).